A 143-amino-acid polypeptide reads, in one-letter code: Putative pre-16S rRNA nuclease (143 aa).

The protein belongs to the YqgF nuclease family.

It is found in the cytoplasm. Could be a nuclease involved in processing of the 5'-end of pre-16S rRNA. This chain is Putative pre-16S rRNA nuclease, found in Lactococcus lactis subsp. cremoris (strain SK11).